A 657-amino-acid chain; its full sequence is Archaeal Lon protease (657 aa).

Residues 1 to 123 (MEENIESVEE…KAEREKRDRS (123 aa)) lie on the Cytoplasmic side of the membrane. Residue 57-64 (GEPGTGKS) participates in ATP binding. A helical membrane pass occupies residues 124 to 144 (RSIMFVIFSVVLLGIIAAIVL). Position 145 (Arg-145) is a topological domain, extracellular. A helical transmembrane segment spans residues 146–166 (SITLIFFAIMAAAFLYMAMAF). The Cytoplasmic segment spans residues 167–657 (NPVIRNERAM…ATTRAGNNAA (491 aa)). The Lon proteolytic domain occupies 433–618 (GSVVGMVNGL…EDVLRVALVN (186 aa)). Active-site residues include Ser-525 and Lys-568.

It belongs to the peptidase S16 family. Archaeal LonB subfamily. In terms of assembly, homohexamer. Organized in a ring with a central cavity.

The protein localises to the cell membrane. Functionally, ATP-dependent serine protease that mediates the selective degradation of mutant and abnormal proteins as well as certain short-lived regulatory proteins. Degrades polypeptides processively. This chain is Archaeal Lon protease, found in Thermoplasma acidophilum (strain ATCC 25905 / DSM 1728 / JCM 9062 / NBRC 15155 / AMRC-C165).